A 315-amino-acid chain; its full sequence is Archaeosortase A (315 aa).

The next 7 helical transmembrane spans lie at 12–32 (VIPYTDVLAWVVMAAFIAGVA), 47–67 (AGAWWLFAVFWFVLIQHFAFV), 74–94 (TVLILIAVPACLYVGWLVFAG), 173–193 (VVFECTGIGAMSIFGGLIAAV), 204–224 (IALSISIIWVLNIGRNVFIAL), 227–247 (GYQWFAYSWLEGPIMALFGLT), and 260–280 (VLAQLLAVVALAGLAWFIARW). Cys177 serves as the catalytic Acyl-thioester intermediate. Residue Arg218 is the Proton donor of the active site.

It belongs to the exosortase/archaeosortase family. Archaeosortase A subfamily.

The protein localises to the cell membrane. In terms of biological role, transpeptidase that recognizes and modifies its substrate by proteolytic cleavage of a sorting signal. Following cleavage, a covalent intermediate is formed via a thioester bond between the archaeosortase and its substrate, which is then transferred and covalently attached to the cell membrane. This Natronomonas pharaonis (strain ATCC 35678 / DSM 2160 / CIP 103997 / JCM 8858 / NBRC 14720 / NCIMB 2260 / Gabara) (Halobacterium pharaonis) protein is Archaeosortase A.